A 356-amino-acid polypeptide reads, in one-letter code: Vacuolar protein sorting-associated protein 26 (356 aa).

The disordered stretch occupies residues 301–356; that stretch reads MRRPGTEDDEEEKQTTSIPGTQKFTAPAPVEHPKPESPRSDPKSGSTSPDDNSDSS. The span at 315 to 324 shows a compositional bias: polar residues; sequence TTSIPGTQKF. Residues 331–342 are compositionally biased toward basic and acidic residues; the sequence is EHPKPESPRSDP.

The protein belongs to the VPS26 family.

May play a role in vesicular protein sorting, similar to the yeast retromer proteins. This is Vacuolar protein sorting-associated protein 26 (vps-26) from Caenorhabditis elegans.